The following is a 171-amino-acid chain: ATP synthase subunit b (171 aa).

A helical membrane pass occupies residues 26 to 46 (INLVLVIALLVYFLKGFLGGI).

Belongs to the ATPase B chain family. As to quaternary structure, F-type ATPases have 2 components, F(1) - the catalytic core - and F(0) - the membrane proton channel. F(1) has five subunits: alpha(3), beta(3), gamma(1), delta(1), epsilon(1). F(0) has four main subunits: a(1), b(1), b'(1) and c(10-14). The alpha and beta chains form an alternating ring which encloses part of the gamma chain. F(1) is attached to F(0) by a central stalk formed by the gamma and epsilon chains, while a peripheral stalk is formed by the delta, b and b' chains.

It is found in the cellular thylakoid membrane. Its function is as follows. F(1)F(0) ATP synthase produces ATP from ADP in the presence of a proton or sodium gradient. F-type ATPases consist of two structural domains, F(1) containing the extramembraneous catalytic core and F(0) containing the membrane proton channel, linked together by a central stalk and a peripheral stalk. During catalysis, ATP synthesis in the catalytic domain of F(1) is coupled via a rotary mechanism of the central stalk subunits to proton translocation. Functionally, component of the F(0) channel, it forms part of the peripheral stalk, linking F(1) to F(0). The polypeptide is ATP synthase subunit b (Synechococcus sp. (strain RCC307)).